Reading from the N-terminus, the 309-residue chain is NAD kinase 2 (309 aa).

Catalysis depends on Asp81, which acts as the Proton acceptor. Residues 81 to 82 (DG), 155 to 156 (NE), Asp185, 196 to 201 (TAYALS), and Asn255 each bind NAD(+).

This sequence belongs to the NAD kinase family. A divalent metal cation is required as a cofactor.

The protein localises to the cytoplasm. It carries out the reaction NAD(+) + ATP = ADP + NADP(+) + H(+). In terms of biological role, involved in the regulation of the intracellular balance of NAD and NADP, and is a key enzyme in the biosynthesis of NADP. Catalyzes specifically the phosphorylation on 2'-hydroxyl of the adenosine moiety of NAD to yield NADP. This Gloeobacter violaceus (strain ATCC 29082 / PCC 7421) protein is NAD kinase 2.